A 419-amino-acid chain; its full sequence is Synaptotagmin-2 (419 aa).

Residues Met1–Pro62 lie on the Vesicular side of the membrane. A disordered region spans residues Ala16–Ser39. The N-linked (GlcNAc...) asparagine glycan is linked to Asn29. The chain crosses the membrane as a helical span at residues Trp63–Ile83. Over Cys84–Lys419 the chain is Cytoplasmic. The segment at Gly99 to Glu138 is disordered. A compositionally biased stretch (acidic residues) spans Asp116–Glu136. 2 positions are modified to phosphothreonine: Thr122 and Thr125. A phospholipid binding region spans residues Glu133–Asn379. 2 C2 domains span residues Asn139 to Arg258 and Lys270 to His403. Ca(2+) is bound by residues Leu169, Asp170, and Asp176. At Thr199 the chain carries Phosphothreonine. Tyr227 bears the Phosphotyrosine mark. Residues Asp228, Phe229, Asp230, Ser233, Lys234, Asp236, Asp301, Asp307, Asp361, and Asp363 each contribute to the Ca(2+) site. A Phosphothreonine modification is found at Thr383.

It belongs to the synaptotagmin family. Homotetramer. Heterodimer; heterodimerizes with SYT1 in presence of calcium. Interacts with STON2. Interacts with SCAMP5. Interacts with PRRT2. The cofactor is Ca(2+). Phosphorylation at Thr-199 by WNK1, changes the calcium requirement for SYT2-binding to phospholipid membranes. As to expression, expressed at the neuromuscular junction. Expressed in melanocytes.

The protein localises to the cytoplasmic vesicle. Its subcellular location is the secretory vesicle. The protein resides in the synaptic vesicle membrane. It localises to the chromaffin granule membrane. It is found in the cytoplasm. Its function is as follows. Exhibits calcium-dependent phospholipid and inositol polyphosphate binding properties. May have a regulatory role in the membrane interactions during trafficking of synaptic vesicles at the active zone of the synapse. Plays a role in dendrite formation by melanocytes. In Homo sapiens (Human), this protein is Synaptotagmin-2.